We begin with the raw amino-acid sequence, 352 residues long: Heat-inducible transcription repressor HrcA (352 aa).

The protein belongs to the HrcA family.

Functionally, negative regulator of class I heat shock genes (grpE-dnaK-dnaJ and groELS operons). Prevents heat-shock induction of these operons. In Latilactobacillus sakei subsp. sakei (strain 23K) (Lactobacillus sakei subsp. sakei), this protein is Heat-inducible transcription repressor HrcA.